The chain runs to 376 residues: Chlorophyll synthase, chloroplastic (376 aa).

A chloroplast-targeting transit peptide spans 1-47 (MATSHLLAAASSTAASSATFRPPLLSLRSPPPSSLRLNRRRHFQVVR). Positions 48–69 (AAETDKETKANAPEKAPAGGSS) are disordered. 8 helical membrane passes run 95 to 115 (PVTW…SGNF), 171 to 191 (VITQ…LLDV), 197 to 217 (FPII…YSAP), 230 to 250 (FALG…LFGT), 255 to 275 (IVVL…VNDF), 300 to 320 (WICV…LFSS), 325 to 345 (YALA…QYFL), and 355 to 375 (YQAS…LATS).

Belongs to the UbiA prenyltransferase family. Chlorophyll synthase subfamily.

The protein localises to the plastid. The protein resides in the chloroplast membrane. The enzyme catalyses phytyl diphosphate + chlorophyllide a + H(+) = chlorophyll a + diphosphate. In terms of biological role, involved in one of the last steps of the biosynthesis of chlorophyll a. The sequence is that of Chlorophyll synthase, chloroplastic (CHLG) from Oryza sativa subsp. japonica (Rice).